A 2111-amino-acid polypeptide reads, in one-letter code: MAVLSSVQPINHNSALVEARDEQVNTTACSDDLLNAPPYEYDTEGNPSWAGALPKAQALYDPAYEKDSCGVGFTCHIKGQVSHKIVTDARLLLCNMTHRGATGADTRDGDGAGVMTGMPYTFMQKEFGQIGCTLPKSGEYAIGNVFFSPEADVCREAMTAFTQVAEKLGLAILAWRSVPCDNSILGPAALSREPTILQPCVVLKAAYDGEAEFDTDLFERQLYVLRKQSSHLIGKEKWFYICSLHRETIVYKGQLAPVQVYNYFLDLNNAEYVSHFALVHSRFSTNTFPSWDRAQPMRLAAHNGEINTLRGNKNWMHAREGLMKSSRFGEEFASLLPIIERGGSDSAAFDNVIELLCASGVVSLPEAVMLLIPEAWQNDKNISDEKAAFYEWAACQMEPWDGPALFTFADGRYCGANLDRNGLRPCRFYLTSDDMMICASEVGTVGIEPDRIVQKGRLYPGRMLLVDTKEGRIVDDKELKHNIASRYDFRSWLDQELIDMNSIVDSLIESTSVDLTPIVDDVPLADDKTMLAFGYTLEQINMIMAPMANGGKETLGSMGNDAAIACLSDQPRLLYDYFRQLFAQVTNPPIDPIREAIVMSLQCYIGPSGNLLEINQSQCRRLRMPTPILTVEEFNALKNVDRIYPDWKVASIDITFFKSEGVAGYAAAIERICSEADTAVNEGYKAIVLSDRNVNSERVPLASIAACGAVHHYLVQNKLRSRVALVCESGDAREVHHMCTLLGYGADAVCPYLAMEALTKLVRQNAMKPGITEETAIKNFKHAINGGILKVMSKMGISTLQSYKGAQIFEALGIDNEVINKCFLGTASRIRGVTFEHIALDAFALHERGYPTDQSIRSLQIPDMGDFYYRDGGEQHVNHPKAIASLQDAVRNKNEAAYAEFSRTHYEQTRRCTLRGMLDFDFDSSQAIPIEQVEPWTEIVRRFCTGAMSYGSISMESHSSLAIAMNRLGGKSNTGEGGEDPARSQRLANGDTMRSAIKQIASGRFGVTSWYLSDADELQIKMAQGAKPGEGGELPGNKVSESIAKTRHSTAGVGLISPPPHHDIYSIEDLKQLIYDMKSANPRARVSVKLVSEVGVGIVASGVAKAKADHILVSGHDGGTGASRWTGIKYAGLPWELGVAETHQTLVLNDLRGRVVIQTDGQIRTGRDVAIACLLGAEEWGFATTPLIALGCIMMRKCHLNTCPVGIATQDPELRKKFEGQPEHVVNFFYYVAEELRGIMAKLGFRTINEMVGRSDKLKVAEPINNKSKLLDLTPLLTPAFTLRPGAATYNVRKQDHRLYTRLDNKLIDEAEVTLEEGIPSVVECEIINTDRTLGATLSNKISKRYGEEGLPTDSIRVNVFGSAGQSFGAFLAPGVTLQLEGDCNDYVGKGLSGGRLIIYPPRVSPFKPEENMIIGNVCLYGATSGHAFISGVAAERFAVRNSGAIAVVEGVGDHGCEYMTGGRVVILGSTGRNFAAGMSGGIAYVYDMQMDFAGKINTEMVDISSVTDAAEIAFLRGLIQDHRHYTGSQVADRILSDFPRHLSRFVKVLPREYKAVLEREAAKKEEAKRLQYPKAFMPGNPIRQQIEETNAQIADVEDTLGATVKKSAPLDKLRGFMKYQRRSEHYRNPLKRTNDWKELSVRLREDELRVQTARCMDCGTPFCQSDYGCPISNKIFTWNDLVFKQQWKEALTQLLLTNNFPEFTGRVCPAPCEGACTLGIIESPVGIKSVERAIIDKAWEEGWIVPRPPAERTGRRVAIIGSGPAGLAAADQLNRAGHHVVIYERADRPGGLLQYGIPNMKLDKKVVERRIQLMIDEGIEVLTNVEVGKNGDVSLDELHKVYDAVVLASGSTVPRDLPIPNRDSKGIHFAMEFLHKNTKSLLDSELKDGNYISAKGKDVIVIGGGDTGNDCLGTSVRHGAKSVRNLELLPIPPRERAFDNPWPQYPRVFRVDYGHAEVQAHYGQDFREYSILTKSFEKDEDGNVKGINTVRIEWTKNSKGRWIMKEIRNSEEFFPADLVILALGFLGPEEQATAGMNVDRDARSNISTPTKSYETSVPGIYAAGDCRRGQSLVVWGIQEGRQCAREIDLKFQGKTFLPGDGGLVKRTVNC.

The active-site Nucleophile is Cys-69. The Glutamine amidotransferase type-2 domain occupies 69 to 469 (CGVGFTCHIK…PGRMLLVDTK (401 aa)). A disordered region spans residues 969–990 (GGKSNTGEGGEDPARSQRLANG). 1139-1191 (VAETHQTLVLNDLRGRVVIQTDGQIRTGRDVAIACLLGAEEWGFATTPLIALG) contacts FMN. [3Fe-4S] cluster contacts are provided by Cys-1192, Cys-1198, and Cys-1203.

The protein belongs to the glutamate synthase family. Homotrimer. [3Fe-4S] cluster is required as a cofactor. The cofactor is FAD. It depends on FMN as a cofactor.

It is found in the cytoplasm. The catalysed reaction is 2 L-glutamate + NAD(+) = L-glutamine + 2-oxoglutarate + NADH + H(+). The protein operates within amino-acid biosynthesis; L-glutamate biosynthesis via GLT pathway; L-glutamate from 2-oxoglutarate and L-glutamine (NAD(+) route): step 1/1. It participates in energy metabolism; nitrogen metabolism. In the presence of 10 mM allantoin, the activity is reduced more than 25%. In terms of biological role, forms L-glutamate from L-glutamine and 2-oxoglutarate. Represents an alternative pathway to L-glutamate dehydrogenase for the biosynthesis of L-glutamate. Participates with glutamine synthetase in ammonia assimilation processes. The enzyme is specific for NADH, L-glutamine and 2-oxoglutarate. This chain is Glutamate synthase [NADH] (glt1), found in Schizosaccharomyces pombe (strain 972 / ATCC 24843) (Fission yeast).